The following is a 153-amino-acid chain: Late embryogenesis abundant protein B19.4 (153 aa).

Residues 1-153 (MASGQQERSE…IDESKFKTKS (153 aa)) form a disordered region. 3 stretches are compositionally biased toward basic and acidic residues: residues 7 to 19 (ERSELDRMAREGE), 32 to 122 (EAQE…EMGR), and 133 to 153 (GGERAAREGIDIDESKFKTKS). 4 consecutive repeat copies span residues 43–62 (RGGQTRKEQLGEEGYREMGH), 63–82 (KGGETRKEQLGEEGYREMGH), 83–102 (KGGETRKEQLGEEGYREMGH), and 103–122 (KGGETRKEQMGEEGYREMGR). Residues 43–122 (RGGQTRKEQL…GEEGYREMGR (80 aa)) are 4 X 20 AA tandem repeats.

It belongs to the small hydrophilic plant seed protein family.

Functionally, lea proteins are late embryonic proteins abundant in higher plant seed embryos. This is Late embryogenesis abundant protein B19.4 (B19.4) from Hordeum vulgare (Barley).